A 511-amino-acid chain; its full sequence is 2,3-bisphosphoglycerate-independent phosphoglycerate mutase (511 aa).

The Mn(2+) site is built by D18 and S68. Residue S68 is the Phosphoserine intermediate of the active site. Residues H129, 159-160 (RD), R191, K197, 261-264 (RSDR), and K329 each bind substrate. Mn(2+) is bound by residues D396, H400, D437, H438, and H459. The disordered stretch occupies residues 442 to 464 (ERMTKQAPDGSVRPYGGHTTNPV).

The protein belongs to the BPG-independent phosphoglycerate mutase family. In terms of assembly, monomer. The cofactor is Mn(2+).

It catalyses the reaction (2R)-2-phosphoglycerate = (2R)-3-phosphoglycerate. The protein operates within carbohydrate degradation; glycolysis; pyruvate from D-glyceraldehyde 3-phosphate: step 3/5. In terms of biological role, catalyzes the interconversion of 2-phosphoglycerate and 3-phosphoglycerate. The polypeptide is 2,3-bisphosphoglycerate-independent phosphoglycerate mutase (Streptomyces coelicolor (strain ATCC BAA-471 / A3(2) / M145)).